A 254-amino-acid polypeptide reads, in one-letter code: 3-oxo-5-alpha-steroid 4-dehydrogenase 2 (254 aa).

4 helical membrane passes run 8–28 (SPVLAGSATLVALGALVLYVA), 72–92 (PLSLFGPPGTVLLGLFCVHYF), 146–166 (FCLGVFLFILGMGVNIHSDYI), and 206–226 (LATWSLPALAFAFFSVCFLGL).

Belongs to the steroid 5-alpha reductase family.

Its subcellular location is the microsome membrane. It localises to the endoplasmic reticulum membrane. The enzyme catalyses a 3-oxo-5alpha-steroid + NADP(+) = a 3-oxo-Delta(4)-steroid + NADPH + H(+). It carries out the reaction 17beta-hydroxy-5alpha-androstan-3-one + NADP(+) = testosterone + NADPH + H(+). The catalysed reaction is 5alpha-pregnane-3,20-dione + NADP(+) = progesterone + NADPH + H(+). In terms of biological role, converts testosterone (T) into 5-alpha-dihydrotestosterone (DHT) and progesterone or corticosterone into their corresponding 5-alpha-3-oxosteroids. It plays a central role in sexual differentiation and androgen physiology. The chain is 3-oxo-5-alpha-steroid 4-dehydrogenase 2 (SRD5A2) from Macaca fascicularis (Crab-eating macaque).